The sequence spans 798 residues: Iron-regulated transcriptional activator AFT2 (798 aa).

Disordered stretches follow at residues 142 to 274 (RSNK…KKLK), 331 to 365 (YPQP…QENN), 449 to 545 (NVDL…LPGS), 642 to 718 (QQQQ…NNIN), and 748 to 798 (QGNP…GPGW). A compositionally biased stretch (polar residues) spans 153–165 (EIANTPSVTSYSP). Residues 193–223 (STQSTRSSSSSDGSSIVSFGSLTSQSSSTSL) are compositionally biased toward low complexity. Over residues 256 to 274 (PVKRKNMKANTMKKSKKLK) the composition is skewed to basic residues. Polar residues predominate over residues 449–460 (NVDLEQNGSNEN). Low complexity predominate over residues 476–517 (ENQFSYQSQIQNQRQNQNQNQGQNQNQNQSQSQTPGQNSNQN). Composition is skewed to polar residues over residues 518 to 543 (DSQT…NWLP) and 646 to 656 (PMFSMQNSGQQ). Low complexity-rich tracts occupy residues 657 to 695 (LPPL…TLNP) and 705 to 718 (NSTN…NNIN). Residues 748 to 773 (QGNPTNSNQSMVNSIMTTNSNKDGTA) are compositionally biased toward polar residues. Residues 774 to 789 (TSNNNSSGNTSNNLLN) are compositionally biased toward low complexity.

The protein resides in the nucleus. In terms of biological role, transcription factor involved in iron metabolism, oxidative stress, surface adhesion, hyphal development and virulence. Functions as a negative regulator of MRS4 expression through the CACCC AFT-type sequence in a gene dose-dependent fashion. Acts as a repressor in flocculation, plastic adhesion, and surface hydrophobicity. The chain is Iron-regulated transcriptional activator AFT2 (AFT2) from Candida albicans (strain SC5314 / ATCC MYA-2876) (Yeast).